We begin with the raw amino-acid sequence, 190 residues long: Segregation and condensation protein B (190 aa).

It belongs to the ScpB family. In terms of assembly, homodimer. Homodimerization may be required to stabilize the binding of ScpA to the Smc head domains. Component of a cohesin-like complex composed of ScpA, ScpB and the Smc homodimer, in which ScpA and ScpB bind to the head domain of Smc. The presence of the three proteins is required for the association of the complex with DNA.

The protein resides in the cytoplasm. Functionally, participates in chromosomal partition during cell division. May act via the formation of a condensin-like complex containing Smc and ScpA that pull DNA away from mid-cell into both cell halves. This is Segregation and condensation protein B from Ruminiclostridium cellulolyticum (strain ATCC 35319 / DSM 5812 / JCM 6584 / H10) (Clostridium cellulolyticum).